We begin with the raw amino-acid sequence, 357 residues long: Anthranilate phosphoribosyltransferase (357 aa).

5-phospho-alpha-D-ribose 1-diphosphate contacts are provided by residues G91, G94–D95, T99, N101–T104, K119–S127, and S131. Anthranilate is bound at residue G91. S103 contacts Mg(2+). Residue N122 coordinates anthranilate. R177 is a binding site for anthranilate. D235 and E236 together coordinate Mg(2+).

This sequence belongs to the anthranilate phosphoribosyltransferase family. Homodimer. Mg(2+) is required as a cofactor.

The enzyme catalyses N-(5-phospho-beta-D-ribosyl)anthranilate + diphosphate = 5-phospho-alpha-D-ribose 1-diphosphate + anthranilate. It functions in the pathway amino-acid biosynthesis; L-tryptophan biosynthesis; L-tryptophan from chorismate: step 2/5. Its function is as follows. Catalyzes the transfer of the phosphoribosyl group of 5-phosphorylribose-1-pyrophosphate (PRPP) to anthranilate to yield N-(5'-phosphoribosyl)-anthranilate (PRA). In Shewanella baltica (strain OS195), this protein is Anthranilate phosphoribosyltransferase.